The sequence spans 339 residues: Basic membrane protein A (339 aa).

Residues 1–17 (MNKILLLILLESIVFLS) form the signal peptide. Cysteine 18 is lipidated: N-palmitoyl cysteine. The S-diacylglycerol cysteine moiety is linked to residue cysteine 18.

It belongs to the BMP lipoprotein family. As to quaternary structure, monomer.

It is found in the cell inner membrane. Its function is as follows. Immunogenic protein. May be part of an ABC-type nucleoside uptake system involved in the purine salvage pathway. The chain is Basic membrane protein A (bmpA) from Borreliella burgdorferi (strain ATCC 35210 / DSM 4680 / CIP 102532 / B31) (Borrelia burgdorferi).